The primary structure comprises 314 residues: tRNA pseudouridine synthase B (314 aa).

Histidine 43 lines the substrate pocket. Catalysis depends on aspartate 48, which acts as the Nucleophile. Positions 76, 179, and 200 each coordinate substrate.

The protein belongs to the pseudouridine synthase TruB family. Type 1 subfamily.

The enzyme catalyses uridine(55) in tRNA = pseudouridine(55) in tRNA. Its function is as follows. Responsible for synthesis of pseudouridine from uracil-55 in the psi GC loop of transfer RNAs. The sequence is that of tRNA pseudouridine synthase B from Salmonella arizonae (strain ATCC BAA-731 / CDC346-86 / RSK2980).